The chain runs to 328 residues: Transcription initiation factor IIE subunit beta (328 aa).

A disordered region spans residues 32 to 105 (QKKTNDTVIT…SSPSKKVRPG (74 aa)). Serine 52 is subject to Phosphoserine. A compositionally biased stretch (acidic residues) spans 85-94 (LDDDDDDEDF). Residues serine 97 and serine 106 each carry the phosphoserine modification. Residues 113–187 (QANQTDISKS…FKYLSTYDVH (75 aa)) constitute a DNA-binding region (TFIIE beta).

The protein belongs to the TFIIE beta subunit family. As to quaternary structure, TFIIE is a tetramer of two alpha (TFA1) and two beta (TFA2) subunits.

It localises to the nucleus. Functionally, recruits TFIIH to the initiation complex and stimulates the RNA polymerase II C-terminal domain kinase and DNA-dependent ATPase activities of TFIIH. Both TFIIH and TFIIE are required for promoter clearance by RNA polymerase. This is Transcription initiation factor IIE subunit beta (TFA2) from Saccharomyces cerevisiae (strain ATCC 204508 / S288c) (Baker's yeast).